Here is a 331-residue protein sequence, read N- to C-terminus: tRNA N6-adenosine threonylcarbamoyltransferase (331 aa).

Fe cation is bound by residues His108 and His112. Residues 129 to 133 (LVSGG), Asp161, Glu178, and Ser258 contribute to the substrate site. Asp286 is a Fe cation binding site.

This sequence belongs to the KAE1 / TsaD family. Fe(2+) serves as cofactor.

The protein localises to the cytoplasm. It catalyses the reaction L-threonylcarbamoyladenylate + adenosine(37) in tRNA = N(6)-L-threonylcarbamoyladenosine(37) in tRNA + AMP + H(+). Required for the formation of a threonylcarbamoyl group on adenosine at position 37 (t(6)A37) in tRNAs that read codons beginning with adenine. Is probably involved in the transfer of the threonylcarbamoyl moiety of threonylcarbamoyl-AMP (TC-AMP) to the N6 group of A37. In Caldivirga maquilingensis (strain ATCC 700844 / DSM 13496 / JCM 10307 / IC-167), this protein is tRNA N6-adenosine threonylcarbamoyltransferase.